Consider the following 223-residue polypeptide: Urease accessory protein UreF (223 aa).

Belongs to the UreF family. As to quaternary structure, ureD, UreF and UreG form a complex that acts as a GTP-hydrolysis-dependent molecular chaperone, activating the urease apoprotein by helping to assemble the nickel containing metallocenter of UreC. The UreE protein probably delivers the nickel.

It is found in the cytoplasm. In terms of biological role, required for maturation of urease via the functional incorporation of the urease nickel metallocenter. The chain is Urease accessory protein UreF from Rhizobium leguminosarum bv. trifolii (strain WSM2304).